Reading from the N-terminus, the 591-residue chain is Aspartate--tRNA ligase (591 aa).

Position 171 (Glu-171) interacts with L-aspartate. Positions 195-198 are aspartate; sequence QLFK. Arg-217 serves as a coordination point for L-aspartate. ATP contacts are provided by residues 217–219 and Gln-226; that span reads RDE. Position 448 (His-448) interacts with L-aspartate. Residue Glu-482 participates in ATP binding. L-aspartate is bound at residue Arg-489. 534–537 lines the ATP pocket; sequence GLDR.

The protein belongs to the class-II aminoacyl-tRNA synthetase family. Type 1 subfamily. Homodimer.

The protein resides in the cytoplasm. The enzyme catalyses tRNA(Asp) + L-aspartate + ATP = L-aspartyl-tRNA(Asp) + AMP + diphosphate. Functionally, catalyzes the attachment of L-aspartate to tRNA(Asp) in a two-step reaction: L-aspartate is first activated by ATP to form Asp-AMP and then transferred to the acceptor end of tRNA(Asp). The chain is Aspartate--tRNA ligase from Vibrio cholerae serotype O1 (strain ATCC 39541 / Classical Ogawa 395 / O395).